The chain runs to 131 residues: Ribosome-binding factor A (131 aa).

This sequence belongs to the RbfA family. Monomer. Binds 30S ribosomal subunits, but not 50S ribosomal subunits or 70S ribosomes.

The protein resides in the cytoplasm. In terms of biological role, one of several proteins that assist in the late maturation steps of the functional core of the 30S ribosomal subunit. Associates with free 30S ribosomal subunits (but not with 30S subunits that are part of 70S ribosomes or polysomes). Required for efficient processing of 16S rRNA. May interact with the 5'-terminal helix region of 16S rRNA. This is Ribosome-binding factor A from Chromohalobacter salexigens (strain ATCC BAA-138 / DSM 3043 / CIP 106854 / NCIMB 13768 / 1H11).